Reading from the N-terminus, the 86-residue chain is Neurotoxin E1x (86 aa).

Positions 1–19 (MNSLLMITACLVVIGTVWA) are cleaved as a signal peptide. The 65-residue stretch at 20 to 84 (KEGYLVDVKG…TWPLPNKTCG (65 aa)) folds into the LCN-type CS-alpha/beta domain. Intrachain disulfides connect cysteine 30–cysteine 83, cysteine 34–cysteine 59, cysteine 43–cysteine 64, and cysteine 47–cysteine 66. Cysteine 83 carries the cysteine amide modification.

The protein belongs to the long (4 C-C) scorpion toxin superfamily. Sodium channel inhibitor family. Beta subfamily. Expressed by the venom gland.

It localises to the secreted. Functionally, binds to sodium channels (Nav) and inhibits the inactivation of the activated channels, thereby blocking neuronal transmission. This Centruroides sculpturatus (Arizona bark scorpion) protein is Neurotoxin E1x.